Here is a 449-residue protein sequence, read N- to C-terminus: Tubulin beta chain (449 aa).

8 residues coordinate GTP: Q11, E69, S138, G142, T143, G144, N204, and N226. E69 is a Mg(2+) binding site. A disordered region spans residues 426 to 449 (QDATAEEEGEFDEEEGEMGAEEGA). A compositionally biased stretch (acidic residues) spans 429 to 449 (TAEEEGEFDEEEGEMGAEEGA).

The protein belongs to the tubulin family. In terms of assembly, dimer of alpha and beta chains. A typical microtubule is a hollow water-filled tube with an outer diameter of 25 nm and an inner diameter of 15 nM. Alpha-beta heterodimers associate head-to-tail to form protofilaments running lengthwise along the microtubule wall with the beta-tubulin subunit facing the microtubule plus end conferring a structural polarity. Microtubules usually have 13 protofilaments but different protofilament numbers can be found in some organisms and specialized cells. The cofactor is Mg(2+).

It is found in the cytoplasm. The protein resides in the cytoskeleton. Tubulin is the major constituent of microtubules, a cylinder consisting of laterally associated linear protofilaments composed of alpha- and beta-tubulin heterodimers. Microtubules grow by the addition of GTP-tubulin dimers to the microtubule end, where a stabilizing cap forms. Below the cap, tubulin dimers are in GDP-bound state, owing to GTPase activity of alpha-tubulin. The chain is Tubulin beta chain from Toxoplasma gondii.